Consider the following 80-residue polypeptide: Small ribosomal subunit protein bS16 (80 aa).

This sequence belongs to the bacterial ribosomal protein bS16 family.

The chain is Small ribosomal subunit protein bS16 from Blochmanniella pennsylvanica (strain BPEN).